The sequence spans 348 residues: Fructose-1,6-bisphosphatase class 1 (348 aa).

Residues E92, D111, L113, and D114 each contribute to the Mg(2+) site. Substrate is bound by residues 114 to 117 and N204; that span reads DGSS. E276 is a Mg(2+) binding site.

Belongs to the FBPase class 1 family. In terms of assembly, homotetramer. Mg(2+) serves as cofactor.

Its subcellular location is the cytoplasm. It carries out the reaction beta-D-fructose 1,6-bisphosphate + H2O = beta-D-fructose 6-phosphate + phosphate. The protein operates within carbohydrate biosynthesis; gluconeogenesis. The protein is Fructose-1,6-bisphosphatase class 1 of Methylorubrum extorquens (strain PA1) (Methylobacterium extorquens).